A 496-amino-acid chain; its full sequence is Steroid 21-hydroxylase (496 aa).

Serine 109 contributes to the heme b binding site. Arginine 232 is a 17alpha-hydroxyprogesterone binding site. Arginine 232 is a progesterone binding site. 3 residues coordinate heme b: histidine 364, arginine 425, and cysteine 427.

It belongs to the cytochrome P450 family. It depends on heme b as a cofactor.

The protein resides in the endoplasmic reticulum membrane. Its subcellular location is the microsome membrane. The catalysed reaction is progesterone + reduced [NADPH--hemoprotein reductase] + O2 = 21-hydroxyprogesterone + oxidized [NADPH--hemoprotein reductase] + H2O + H(+). The enzyme catalyses 17alpha-hydroxyprogesterone + reduced [NADPH--hemoprotein reductase] + O2 = 11-deoxycortisol + oxidized [NADPH--hemoprotein reductase] + H2O + H(+). Its function is as follows. A cytochrome P450 monooxygenase that plays a major role in adrenal steroidogenesis. Catalyzes the hydroxylation at C-21 of progesterone and 17alpha-hydroxyprogesterone to respectively form 11-deoxycorticosterone and 11-deoxycortisol, intermediate metabolites in the biosynthetic pathway of mineralocorticoids and glucocorticoids. Mechanistically, uses molecular oxygen inserting one oxygen atom into a substrate, and reducing the second into a water molecule, with two electrons provided by NADPH via cytochrome P450 reductase (CPR; NADPH-ferrihemoprotein reductase). The chain is Steroid 21-hydroxylase (CYP21) from Bos taurus (Bovine).